We begin with the raw amino-acid sequence, 505 residues long: Calcium/calmodulin-dependent protein kinase kinase 1 (505 aa).

The tract at residues threonine 26–leucine 61 is disordered. Phosphoserine occurs at positions 67 and 74. Arginine 78 carries the asymmetric dimethylarginine modification. Serine 100 is modified (phosphoserine). Phosphothreonine is present on threonine 108. A Protein kinase domain is found at tyrosine 128–valine 409. ATP is bound by residues isoleucine 134 to valine 142 and lysine 157. The RP domain stretch occupies residues glutamine 167–glutamine 189. Aspartate 275 serves as the catalytic Proton acceptor. The segment at lysine 435 to leucine 440 is autoinhibitory domain. Positions valine 438–phenylalanine 463 are calmodulin-binding. A phosphoserine mark is found at serine 458, serine 475, and serine 492. The segment at glycine 460 to serine 505 is disordered.

It belongs to the protein kinase superfamily. Ser/Thr protein kinase family. Interacts with CAMK4 and calmodulin. In terms of processing, appears to be autophosphorylated in a Ca(2+)/calmodulin-dependent manner. Phosphorylated at multiple sites by PRCAKA/PKA. Phosphorylation of Ser-458 is blocked upon binding to Ca(2+)/calmodulin. In vitro, phosphorylated by CAMK1 and CAMK4.

It is found in the cytoplasm. It localises to the nucleus. The enzyme catalyses L-seryl-[protein] + ATP = O-phospho-L-seryl-[protein] + ADP + H(+). It carries out the reaction L-threonyl-[protein] + ATP = O-phospho-L-threonyl-[protein] + ADP + H(+). Its activity is regulated as follows. Activated by Ca(2+)/calmodulin. Binding of calmodulin may relieve intrasteric autoinhibition. Partially inhibited upon phosphorylation by PRCAKA/PKA. May be regulated through phosphorylation by CAMK1 and CAMK4. Functionally, calcium/calmodulin-dependent protein kinase that belongs to a proposed calcium-triggered signaling cascade involved in a number of cellular processes. Phosphorylates CAMK1, CAMK1D, CAMK1G and CAMK4. Involved in regulating cell apoptosis. Promotes cell survival by phosphorylating AKT1/PKB that inhibits pro-apoptotic BAD/Bcl2-antagonist of cell death. The chain is Calcium/calmodulin-dependent protein kinase kinase 1 (CAMKK1) from Homo sapiens (Human).